A 150-amino-acid chain; its full sequence is UPF0756 membrane protein ECA1265 (150 aa).

Transmembrane regions (helical) follow at residues 1–21 (MAYI…GIIS), 51–71 (YGLS…IASG), 82–102 (FLHW…WLGG), and 127–147 (ALFR…SLLI).

The protein belongs to the UPF0756 family.

Its subcellular location is the cell membrane. This chain is UPF0756 membrane protein ECA1265, found in Pectobacterium atrosepticum (strain SCRI 1043 / ATCC BAA-672) (Erwinia carotovora subsp. atroseptica).